Consider the following 596-residue polypeptide: Elongation factor 4 (596 aa).

Residues lysine 2–glutamate 184 form the tr-type G domain. GTP-binding positions include aspartate 14–threonine 19 and asparagine 131–aspartate 134.

Belongs to the TRAFAC class translation factor GTPase superfamily. Classic translation factor GTPase family. LepA subfamily.

It is found in the cell inner membrane. It carries out the reaction GTP + H2O = GDP + phosphate + H(+). In terms of biological role, required for accurate and efficient protein synthesis under certain stress conditions. May act as a fidelity factor of the translation reaction, by catalyzing a one-codon backward translocation of tRNAs on improperly translocated ribosomes. Back-translocation proceeds from a post-translocation (POST) complex to a pre-translocation (PRE) complex, thus giving elongation factor G a second chance to translocate the tRNAs correctly. Binds to ribosomes in a GTP-dependent manner. This chain is Elongation factor 4, found in Shewanella oneidensis (strain ATCC 700550 / JCM 31522 / CIP 106686 / LMG 19005 / NCIMB 14063 / MR-1).